Consider the following 340-residue polypeptide: MATGGYRTSSGLGGSTTDFLEEWKAKREKMRAKQNPPGPAPPGGGSSDAAGKPPAGALGTPAAAAANELNNNLPGGAPAAPAVPGPGGVNCAVGSAMLTRAAPGPRRSEDEPPAASASAAPPPQRDEEEPDGVPEKGKSSGPSARKGKGQIEKRKLREKRRSTGVVNIPAAECLDEYEDDEAGQKERKREDAITQQNTIQNEAVNLLDPGSSYLLQEPPRTVSGRYKSTTSVSEEDVSSRYSRTDRSGFPRYNRDANVSGTLVSSSTLEKKIEDLEKEVVRERQENLRLVRLMQDKEEMIGKLKEEIDLLNRDLDDIEDENEQLKQENKTLLKVVGQLTR.

The segment covering 1-18 has biased composition (polar residues); that stretch reads MATGGYRTSSGLGGSTTD. The disordered stretch occupies residues 1-253; the sequence is MATGGYRTSS…TDRSGFPRYN (253 aa). Low complexity predominate over residues 47-82; sequence SDAAGKPPAGALGTPAAAAANELNNNLPGGAPAAPA. The B30.2/SPRY domain-binding motif motif lies at 68 to 72; that stretch reads ELNNN. S108 carries the post-translational modification Phosphoserine. The short motif at 145–161 is the Nuclear localization signal element; it reads RKGKGQIEKRKLREKRR. Positions 145-203 are selective for apoptosis induction in cancer cells (SAC); it reads RKGKGQIEKRKLREKRRSTGVVNIPAAECLDEYEDDEAGQKERKREDAITQQNTIQNEA. Phosphothreonine; by PKA is present on T163. Residues 182-192 are compositionally biased toward basic and acidic residues; the sequence is AGQKERKREDA. Residues 186-206 adopt a coiled-coil conformation; that stretch reads ERKREDAITQQNTIQNEAVNL. Residues 193-203 are compositionally biased toward polar residues; sequence ITQQNTIQNEA. S231 is modified (phosphoserine). Residues 242–253 show a composition bias toward basic and acidic residues; that stretch reads SRTDRSGFPRYN. The tract at residues 300–340 is leucine-zipper; that stretch reads IGKLKEEIDLLNRDLDDIEDENEQLKQENKTLLKVVGQLTR.

As to quaternary structure, homooligomer. Interacts (via the C-terminal region) with WT1. Interacts with THAP1. Interacts with AATF. Interacts with BACE1. Interacts with SPSB1 (via B30.2/SPRY domain); this interaction is direct and occurs in association with the Elongin BC complex. Interacts with SPSB2 (via B30.2/SPRY domain); this interaction occurs in association with the Elongin BC complex. Interacts with SPSB4 (via B30.2/SPRY domain); this interaction occurs in association with the Elongin BC complex. Component of a ternary complex composed of SQSTM1 and PRKCZ. Interacts with actin. Preferentially phosphorylated at the Thr-163 by PKC in cancer cells. Widely expressed. Expression is elevated in various neurodegenerative diseases such as amyotrophic lateral sclerosis, Alzheimer, Parkinson and Huntington diseases and stroke. Down-regulated in several cancers.

The protein localises to the cytoplasm. Its subcellular location is the nucleus. In terms of biological role, pro-apoptotic protein capable of selectively inducing apoptosis in cancer cells, sensitizing the cells to diverse apoptotic stimuli and causing regression of tumors in animal models. Induces apoptosis in certain cancer cells by activation of the Fas prodeath pathway and coparallel inhibition of NF-kappa-B transcriptional activity. Inhibits the transcriptional activation and augments the transcriptional repression mediated by WT1. Down-regulates the anti-apoptotic protein BCL2 via its interaction with WT1. Also seems to be a transcriptional repressor by itself. May be directly involved in regulating the amyloid precursor protein (APP) cleavage activity of BACE1. In Homo sapiens (Human), this protein is PRKC apoptosis WT1 regulator protein (PAWR).